The following is a 240-amino-acid chain: Endonuclease V (240 aa).

Residues aspartate 46 and aspartate 116 each coordinate Mg(2+).

Belongs to the endonuclease V family. Mg(2+) serves as cofactor.

The protein localises to the cytoplasm. It carries out the reaction Endonucleolytic cleavage at apurinic or apyrimidinic sites to products with a 5'-phosphate.. Its function is as follows. DNA repair enzyme involved in the repair of deaminated bases. Selectively cleaves double-stranded DNA at the second phosphodiester bond 3' to a deoxyinosine leaving behind the intact lesion on the nicked DNA. This is Endonuclease V from Rhodospirillum centenum (strain ATCC 51521 / SW).